The primary structure comprises 960 residues: Phosphoenolpyruvate carboxylase 2 (960 aa).

Residues His-167 and Lys-595 contribute to the active site.

It belongs to the PEPCase type 1 family. In terms of assembly, homotetramer. It depends on Mg(2+) as a cofactor.

Its subcellular location is the cytoplasm. The enzyme catalyses oxaloacetate + phosphate = phosphoenolpyruvate + hydrogencarbonate. It functions in the pathway photosynthesis; C3 acid pathway. Functionally, through the carboxylation of phosphoenolpyruvate (PEP) it forms oxaloacetate, a four-carbon dicarboxylic acid source for the tricarboxylic acid cycle. This is Phosphoenolpyruvate carboxylase 2 from Sorghum bicolor (Sorghum).